A 307-amino-acid chain; its full sequence is Alpha N-terminal protein methyltransferase 1 (307 aa).

The segment covering 38–51 (EPAPAPAAGSNGVA) has biased composition (low complexity). The tract at residues 38 to 60 (EPAPAPAAGSNGVAGEEEAGGGG) is disordered. S-adenosyl-L-methionine-binding positions include Gly123, Arg128, 145-147 (EPV), 179-180 (LQ), and Gln195.

The protein belongs to the methyltransferase superfamily. NTM1 family.

The enzyme catalyses N-terminal L-alanyl-L-prolyl-L-lysyl-[protein] + 3 S-adenosyl-L-methionine = N-terminal N,N,N-trimethyl-L-alanyl-L-prolyl-L-lysyl-[protein] + 3 S-adenosyl-L-homocysteine + 3 H(+). It catalyses the reaction N-terminal L-seryl-L-prolyl-L-lysyl-[protein] + 3 S-adenosyl-L-methionine = N-terminal N,N,N-trimethyl-L-seryl-L-prolyl-L-lysyl-[protein] + 3 S-adenosyl-L-homocysteine + 3 H(+). It carries out the reaction N-terminal L-prolyl-L-prolyl-L-lysyl-[protein] + 2 S-adenosyl-L-methionine = N-terminal N,N-dimethyl-L-prolyl-L-prolyl-L-lysyl-[protein] + 2 S-adenosyl-L-homocysteine + 2 H(+). Alpha-N-methyltransferase that methylates the N-terminus of target proteins containing the N-terminal motif [Ala/Pro/Ser]-Pro-Lys when the initiator Met is cleaved. Specifically catalyzes mono-, di- or tri-methylation of exposed alpha-amino group of Ala or Ser residue in the [Ala/Ser]-Pro-Lys motif and mono- or di-methylation of Pro in the Pro-Pro-Lys motif. The polypeptide is Alpha N-terminal protein methyltransferase 1 (Oryza sativa subsp. japonica (Rice)).